A 146-amino-acid chain; its full sequence is D-aminoacyl-tRNA deacylase (146 aa).

A Gly-cisPro motif, important for rejection of L-amino acids motif is present at residues 137-138 (GP).

It belongs to the DTD family. As to quaternary structure, homodimer.

Its subcellular location is the cytoplasm. It catalyses the reaction glycyl-tRNA(Ala) + H2O = tRNA(Ala) + glycine + H(+). The catalysed reaction is a D-aminoacyl-tRNA + H2O = a tRNA + a D-alpha-amino acid + H(+). Its function is as follows. An aminoacyl-tRNA editing enzyme that deacylates mischarged D-aminoacyl-tRNAs. Also deacylates mischarged glycyl-tRNA(Ala), protecting cells against glycine mischarging by AlaRS. Acts via tRNA-based rather than protein-based catalysis; rejects L-amino acids rather than detecting D-amino acids in the active site. By recycling D-aminoacyl-tRNA to D-amino acids and free tRNA molecules, this enzyme counteracts the toxicity associated with the formation of D-aminoacyl-tRNA entities in vivo and helps enforce protein L-homochirality. The sequence is that of D-aminoacyl-tRNA deacylase from Anoxybacillus flavithermus (strain DSM 21510 / WK1).